The primary structure comprises 789 residues: Mitochondrial inner membrane m-AAA protease component AFG3L1 (789 aa).

A mitochondrion-targeting transit peptide spans 1–70 (MLLRLVGAAG…KLTSFSPRLY (70 aa)). A disordered region spans residues 81–121 (FKNKKNRKSASPGNSVPPKKEPKNAGPGGDGGNRGGKGDDF). Residues 106–115 (GPGGDGGNRG) show a composition bias toward gly residues. 2 helical membrane passes run 139-158 (FRSL…YFYF) and 246-264 (FLRS…LYAM). Val-302, Ala-303, Thr-344, Gly-345, Lys-346, Thr-347, Leu-348, and His-482 together coordinate ATP. His-566 provides a ligand contact to Zn(2+). Residue Glu-567 is part of the active site. Zn(2+)-binding residues include His-570 and Asp-641. The interval 749-789 (EEFVEGTGSLEEDTSLPEGLKDWNKGREEGGTERGLQESPV) is disordered. Positions 767 to 789 (GLKDWNKGREEGGTERGLQESPV) are enriched in basic and acidic residues.

This sequence in the N-terminal section; belongs to the AAA ATPase family. The protein in the C-terminal section; belongs to the peptidase M41 family. In terms of assembly, homooligomer. Forms heterohexamers with Spg7 and Afg3l1. The m-AAA protease is either composed of homohexamers of Afg3l2 or heterohexamers of Afg3l1, Afg3l2 and/or Spg7. The cofactor is Zn(2+).

The protein resides in the mitochondrion inner membrane. The enzyme catalyses ATP + H2O = ADP + phosphate + H(+). Catalytic component of the m-AAA protease, a protease that plays a key role in proteostasis of inner mitochondrial membrane proteins, and which is essential for axonal and neuron development. Afg3l1 possesses both ATPase and protease activities: the ATPase activity is required to unfold substrates, threading them into the internal proteolytic cavity for hydrolysis into small peptide fragments. The m-AAA protease exerts a dual role in the mitochondrial inner membrane: it mediates the processing of specific regulatory proteins and ensures protein quality control by degrading misfolded polypeptides. Required for SPG7 maturation into its active mature form after SPG7 cleavage by mitochondrial-processing peptidase (MPP). This is Mitochondrial inner membrane m-AAA protease component AFG3L1 from Mus musculus (Mouse).